The sequence spans 375 residues: Dual specificity protein phosphatase 4 (375 aa).

The Rhodanese domain occupies Ser-25–Ala-143. Positions Gly-176 to Ala-317 constitute a Tyrosine-protein phosphatase domain. Residue Cys-261 is the Phosphocysteine intermediate of the active site.

The protein belongs to the protein-tyrosine phosphatase family. Non-receptor class dual specificity subfamily.

The protein localises to the nucleus. It carries out the reaction O-phospho-L-tyrosyl-[protein] + H2O = L-tyrosyl-[protein] + phosphate. It catalyses the reaction O-phospho-L-seryl-[protein] + H2O = L-seryl-[protein] + phosphate. The enzyme catalyses O-phospho-L-threonyl-[protein] + H2O = L-threonyl-[protein] + phosphate. In terms of biological role, regulates mitogenic signal transduction by dephosphorylating both Thr and Tyr residues on MAP kinases ERK1 and ERK2. The protein is Dual specificity protein phosphatase 4 (DUSP4) of Gallus gallus (Chicken).